Reading from the N-terminus, the 199-residue chain is dITP/XTP pyrophosphatase (199 aa).

Position 12 to 17 (12 to 17 (SGNAGK)) interacts with substrate. Asp73 (proton acceptor) is an active-site residue. Asp73 provides a ligand contact to Mg(2+). Residues Ser74, 157-160 (FGYD), Lys180, and 185-186 (HR) contribute to the substrate site.

Belongs to the HAM1 NTPase family. Homodimer. Mg(2+) is required as a cofactor.

It carries out the reaction XTP + H2O = XMP + diphosphate + H(+). It catalyses the reaction dITP + H2O = dIMP + diphosphate + H(+). The catalysed reaction is ITP + H2O = IMP + diphosphate + H(+). Pyrophosphatase that catalyzes the hydrolysis of nucleoside triphosphates to their monophosphate derivatives, with a high preference for the non-canonical purine nucleotides XTP (xanthosine triphosphate), dITP (deoxyinosine triphosphate) and ITP. Seems to function as a house-cleaning enzyme that removes non-canonical purine nucleotides from the nucleotide pool, thus preventing their incorporation into DNA/RNA and avoiding chromosomal lesions. The polypeptide is dITP/XTP pyrophosphatase (Neisseria meningitidis serogroup A / serotype 4A (strain DSM 15465 / Z2491)).